The primary structure comprises 537 residues: Mitochondria-eating protein (537 aa).

The segment at 1-270 is interaction with YWHAG/14-3-3 protein gamma; sequence MAESLKKLAK…SHSRSRSHSR (270 aa). A phosphoserine mark is found at S13, S85, S123, S127, S154, and S157. The tract at residues 109-150 is disordered; that stretch reads SKNRDNSPDQDQHQSDNESFSETQPTQVQDDLAESGKSLEGA. Basic and acidic residues predominate over residues 110–124; that stretch reads KNRDNSPDQDQHQSD. A compositionally biased stretch (polar residues) spans 125–137; sequence NESFSETQPTQVQ. Coiled coils occupy residues 152 to 184 and 210 to 243; these read NGST…ARHK and QDVV…RSAR. Disordered stretches follow at residues 171 to 212 and 233 to 291; these read QLKS…PQDV and EKSG…RAKM. Positions 179–209 are enriched in basic and acidic residues; the sequence is EDARHKTSENRRSEALKSDHRSTKRTQDQRP. The span at 239–251 shows a compositional bias: low complexity; sequence GRSARSPSPSTGT. The span at 252-269 shows a compositional bias: basic residues; that stretch reads RSHRRGRSRSHSRSRSHS. Phosphoserine occurs at positions 283, 285, and 508.

Belongs to the MIEAP family. Interacts (via coiled-coil domains) with BNIP3L (via BH3 domain). Interacts (via coiled-coil domains) with BNIP3 (via BH3 domain). Interacts with YWHAG/14-3-3 protein gamma; a protein that also plays a role in MALM. As to expression, in testis, expressed primarily in spermatids.

The protein localises to the cytoplasm. It is found in the cytosol. Its subcellular location is the mitochondrion outer membrane. It localises to the mitochondrion matrix. Its function is as follows. Key regulator of mitochondrial quality that mediates the repairing or degradation of unhealthy mitochondria in response to mitochondrial damage. Mediator of mitochondrial protein catabolic process (also named MALM) by mediating the degradation of damaged proteins inside mitochondria by promoting the accumulation in the mitochondrial matrix of hydrolases that are characteristic of the lysosomal lumen. Also involved in mitochondrion degradation of damaged mitochondria by promoting the formation of vacuole-like structures (named MIV), which engulf and degrade unhealthy mitochondria by accumulating lysosomes. The physical interaction of SPATA18/MIEAP, BNIP3 and BNIP3L/NIX at the mitochondrial outer membrane regulates the opening of a pore in the mitochondrial double membrane in order to mediate the translocation of lysosomal proteins from the cytoplasm to the mitochondrial matrix. Binds cardiolipin. May form molecular condensates (non-membrane-bounded organelles) within mitochondria that compartmentalize and promote cardiolipin metabolism. This chain is Mitochondria-eating protein (Spata18), found in Mus musculus (Mouse).